The primary structure comprises 571 residues: Cerebral cavernous malformations 2 protein-like (571 aa).

3 disordered regions span residues 164–193 (AGVDASPGGAGRDPGPPGGAPEKRRVGTAE), 212–295 (AEAR…PQDP), and 544–571 (LAPDDDDDDEDEPRGSRGGSDAAEDNYL). Residues 184–193 (PEKRRVGTAE) are compositionally biased toward basic and acidic residues. Positions 212 to 223 (AEARAGGGGGGS) are enriched in gly residues. Residues 237–251 (WERRQTFSGSWERRH) are compositionally biased toward basic and acidic residues. Positions 253–264 (GGGGGGGAGKPG) are enriched in gly residues. A compositionally biased stretch (pro residues) spans 286–295 (GPNPLDPQDP). Residues 545–555 (APDDDDDDEDE) are compositionally biased toward acidic residues.

This sequence belongs to the CCM2 family.

The polypeptide is Cerebral cavernous malformations 2 protein-like (CCM2L) (Homo sapiens (Human)).